The sequence spans 1116 residues: Minor outer capsid protein P2 (1116 aa).

In terms of domain architecture, PPPDE spans 929-1116; that stretch reads ENNAANFFER…IGSNCSKLCA (188 aa). Residues histidine 953 and cysteine 1111 contribute to the active site.

Belongs to the phytoreovirus minor outer capsid protein P2 family. In terms of assembly, interacts with host ent-kaurene oxidases OSKO1, OSKO2, OSKOL4 and OSKOL5; this interaction.

The protein resides in the virion. It localises to the host cytoplasm. Functionally, minor capsid protein present in the outer capsid, which is required for adsorption of the virus onto host insect cells (Potential). Could play a role in the host plant virus induced dwarfism. The chain is Minor outer capsid protein P2 from Rice dwarf virus (isolate Fujian) (RDV).